We begin with the raw amino-acid sequence, 369 residues long: Delta(12)-oleate desaturase (369 aa).

Helical transmembrane passes span 41 to 61 and 69 to 89; these read LLSD…YFPL and IAWP…WVIA. A Histidine box-1 motif is present at residues 90 to 94; that stretch reads HECGH. Residues 102-122 form a helical membrane-spanning segment; sequence LIDDIVGLFFHSALLVPYFSW. The Histidine box-2 signature appears at 126 to 130; it reads HRRHH. Transmembrane regions (helical) follow at residues 164 to 184, 207 to 227, and 234 to 254; these read LISL…FNMS, WIQV…LYRI, and FWVM…LVLI. The Histidine box-3 motif lies at 300–304; sequence HVVHH.

The protein belongs to the fatty acid desaturase type 1 family.

Its subcellular location is the membrane. Its pathway is lipid metabolism; polyunsaturated fatty acid biosynthesis. Its function is as follows. Delta(12)-fatty acid desaturase producing in a heterologous system linoleic acid (18:2(9Z,12Z)) and to a lower extent hexadecadienoic acid (16:2(9Z,12Z)). This Trichosanthes kirilowii (Chinese snake gourd) protein is Delta(12)-oleate desaturase.